The sequence spans 293 residues: Energy-coupling factor transporter ATP-binding protein EcfA2 (293 aa).

Positions isoleucine 3–aspartate 246 constitute an ABC transporter domain. Glycine 40–serine 47 provides a ligand contact to ATP.

It belongs to the ABC transporter superfamily. Energy-coupling factor EcfA family. In terms of assembly, forms a stable energy-coupling factor (ECF) transporter complex composed of 2 membrane-embedded substrate-binding proteins (S component), 2 ATP-binding proteins (A component) and 2 transmembrane proteins (T component).

Its subcellular location is the cell membrane. Functionally, ATP-binding (A) component of a common energy-coupling factor (ECF) ABC-transporter complex. Unlike classic ABC transporters this ECF transporter provides the energy necessary to transport a number of different substrates. This chain is Energy-coupling factor transporter ATP-binding protein EcfA2, found in Bacillus thuringiensis (strain Al Hakam).